Consider the following 156-residue polypeptide: Ribonuclease H (156 aa).

The RNase H type-1 domain maps to 3 to 144; that stretch reads ELKQIRIYTD…CDTLAREAAE (142 aa). Positions 12, 50, 72, and 136 each coordinate Mg(2+).

Belongs to the RNase H family. In terms of assembly, monomer. The cofactor is Mg(2+).

The protein localises to the cytoplasm. The catalysed reaction is Endonucleolytic cleavage to 5'-phosphomonoester.. Functionally, endonuclease that specifically degrades the RNA of RNA-DNA hybrids. This is Ribonuclease H from Shewanella amazonensis (strain ATCC BAA-1098 / SB2B).